The following is a 528-amino-acid chain: Peptide chain release factor 3 (528 aa).

Residues 11-279 form the tr-type G domain; it reads NKRRTFAIIS…GIVEWAPKPL (269 aa). GTP contacts are provided by residues 20 to 27, 88 to 92, and 142 to 145; these read SHPDAGKT, DTPGH, and NKLD.

It belongs to the TRAFAC class translation factor GTPase superfamily. Classic translation factor GTPase family. PrfC subfamily.

It localises to the cytoplasm. Its function is as follows. Increases the formation of ribosomal termination complexes and stimulates activities of RF-1 and RF-2. It binds guanine nucleotides and has strong preference for UGA stop codons. It may interact directly with the ribosome. The stimulation of RF-1 and RF-2 is significantly reduced by GTP and GDP, but not by GMP. The protein is Peptide chain release factor 3 of Shewanella sp. (strain W3-18-1).